Consider the following 192-residue polypeptide: ATP synthase subunit b (192 aa).

A helical transmembrane segment spans residues 7 to 27; the sequence is LLLVLGVMLLATGVALAAGGE.

It belongs to the ATPase B chain family. As to quaternary structure, F-type ATPases have 2 components, F(1) - the catalytic core - and F(0) - the membrane proton channel. F(1) has five subunits: alpha(3), beta(3), gamma(1), delta(1), epsilon(1). F(0) has three main subunits: a(1), b(2) and c(10-14). The alpha and beta chains form an alternating ring which encloses part of the gamma chain. F(1) is attached to F(0) by a central stalk formed by the gamma and epsilon chains, while a peripheral stalk is formed by the delta and b chains.

It is found in the cell inner membrane. Functionally, f(1)F(0) ATP synthase produces ATP from ADP in the presence of a proton or sodium gradient. F-type ATPases consist of two structural domains, F(1) containing the extramembraneous catalytic core and F(0) containing the membrane proton channel, linked together by a central stalk and a peripheral stalk. During catalysis, ATP synthesis in the catalytic domain of F(1) is coupled via a rotary mechanism of the central stalk subunits to proton translocation. Its function is as follows. Component of the F(0) channel, it forms part of the peripheral stalk, linking F(1) to F(0). The sequence is that of ATP synthase subunit b from Oleidesulfovibrio alaskensis (strain ATCC BAA-1058 / DSM 17464 / G20) (Desulfovibrio alaskensis).